Consider the following 244-residue polypeptide: 3-deoxy-manno-octulosonate cytidylyltransferase (244 aa).

This sequence belongs to the KdsB family.

It is found in the cytoplasm. It catalyses the reaction 3-deoxy-alpha-D-manno-oct-2-ulosonate + CTP = CMP-3-deoxy-beta-D-manno-octulosonate + diphosphate. Its pathway is nucleotide-sugar biosynthesis; CMP-3-deoxy-D-manno-octulosonate biosynthesis; CMP-3-deoxy-D-manno-octulosonate from 3-deoxy-D-manno-octulosonate and CTP: step 1/1. It functions in the pathway bacterial outer membrane biogenesis; lipopolysaccharide biosynthesis. Its function is as follows. Activates KDO (a required 8-carbon sugar) for incorporation into bacterial lipopolysaccharide in Gram-negative bacteria. This is 3-deoxy-manno-octulosonate cytidylyltransferase from Rickettsia bellii (strain OSU 85-389).